The chain runs to 208 residues: MARYTGPTCKLARREGTDLFLKSGIRSLDSKCNVTQLPGMHGANARRQKGTEYGLQLREKQKVRRIYGILEKQFRLYYKKASQKKGSTGENLLSLLECRLDNVVYRMGFGSTRAEARQLVSHKSILMNGLVVNIPSYQVSVNDEISIREKAKKQSRIQLALELAEQSTQPQWLDIDHKALKGVFKNVPARDELSSDIQEHLIVELYSK.

An S4 RNA-binding domain is found at 98 to 160 (CRLDNVVYRM…AKKQSRIQLA (63 aa)).

Belongs to the universal ribosomal protein uS4 family. In terms of assembly, part of the 30S ribosomal subunit. Contacts protein S5. The interaction surface between S4 and S5 is involved in control of translational fidelity.

One of the primary rRNA binding proteins, it binds directly to 16S rRNA where it nucleates assembly of the body of the 30S subunit. In terms of biological role, with S5 and S12 plays an important role in translational accuracy. The polypeptide is Small ribosomal subunit protein uS4 (Ruthia magnifica subsp. Calyptogena magnifica).